We begin with the raw amino-acid sequence, 517 residues long: Bifunctional purine biosynthesis protein PurH (517 aa).

Residues 1–146 (MKRLALLSTS…KNFAHLTVLC (146 aa)) enclose the MGS-like domain.

This sequence belongs to the PurH family.

The catalysed reaction is (6R)-10-formyltetrahydrofolate + 5-amino-1-(5-phospho-beta-D-ribosyl)imidazole-4-carboxamide = 5-formamido-1-(5-phospho-D-ribosyl)imidazole-4-carboxamide + (6S)-5,6,7,8-tetrahydrofolate. The enzyme catalyses IMP + H2O = 5-formamido-1-(5-phospho-D-ribosyl)imidazole-4-carboxamide. The protein operates within purine metabolism; IMP biosynthesis via de novo pathway; 5-formamido-1-(5-phospho-D-ribosyl)imidazole-4-carboxamide from 5-amino-1-(5-phospho-D-ribosyl)imidazole-4-carboxamide (10-formyl THF route): step 1/1. It functions in the pathway purine metabolism; IMP biosynthesis via de novo pathway; IMP from 5-formamido-1-(5-phospho-D-ribosyl)imidazole-4-carboxamide: step 1/1. The polypeptide is Bifunctional purine biosynthesis protein PurH (Trichodesmium erythraeum (strain IMS101)).